The following is a 253-amino-acid chain: 3-deoxy-manno-octulosonate cytidylyltransferase (253 aa).

It belongs to the KdsB family.

Its subcellular location is the cytoplasm. It catalyses the reaction 3-deoxy-alpha-D-manno-oct-2-ulosonate + CTP = CMP-3-deoxy-beta-D-manno-octulosonate + diphosphate. It participates in nucleotide-sugar biosynthesis; CMP-3-deoxy-D-manno-octulosonate biosynthesis; CMP-3-deoxy-D-manno-octulosonate from 3-deoxy-D-manno-octulosonate and CTP: step 1/1. The protein operates within bacterial outer membrane biogenesis; lipopolysaccharide biosynthesis. In terms of biological role, activates KDO (a required 8-carbon sugar) for incorporation into bacterial lipopolysaccharide in Gram-negative bacteria. This chain is 3-deoxy-manno-octulosonate cytidylyltransferase, found in Idiomarina loihiensis (strain ATCC BAA-735 / DSM 15497 / L2-TR).